Reading from the N-terminus, the 254-residue chain is 3-dehydroquinate dehydratase (254 aa).

3-dehydroquinate is bound by residues 47 to 49 and arginine 83; that span reads EWR. Catalysis depends on histidine 144, which acts as the Proton donor/acceptor. Residue lysine 171 is the Schiff-base intermediate with substrate of the active site. Positions 214, 233, and 237 each coordinate 3-dehydroquinate.

It belongs to the type-I 3-dehydroquinase family. As to quaternary structure, homodimer.

The enzyme catalyses 3-dehydroquinate = 3-dehydroshikimate + H2O. Its pathway is metabolic intermediate biosynthesis; chorismate biosynthesis; chorismate from D-erythrose 4-phosphate and phosphoenolpyruvate: step 3/7. Its function is as follows. Involved in the third step of the chorismate pathway, which leads to the biosynthesis of aromatic amino acids. Catalyzes the cis-dehydration of 3-dehydroquinate (DHQ) and introduces the first double bond of the aromatic ring to yield 3-dehydroshikimate. The chain is 3-dehydroquinate dehydratase from Bacillus licheniformis (strain ATCC 14580 / DSM 13 / JCM 2505 / CCUG 7422 / NBRC 12200 / NCIMB 9375 / NCTC 10341 / NRRL NRS-1264 / Gibson 46).